The sequence spans 516 residues: 3-phosphoshikimate 1-carboxyvinyltransferase, chloroplastic (516 aa).

The N-terminal 72 residues, 1–72, are a transit peptide targeting the chloroplast; it reads MAQINNMAQG…RISASVATAQ (72 aa). 3-phosphoshikimate-binding residues include K95, S96, and R100. Residue K95 participates in phosphoenolpyruvate binding. Residues G173 and R203 each contribute to the phosphoenolpyruvate site. Positions 250, 251, 252, 278, 403, and 430 each coordinate 3-phosphoshikimate. Q252 is a phosphoenolpyruvate binding site. The active-site Proton acceptor is D403. R434, R476, and K501 together coordinate phosphoenolpyruvate.

It belongs to the EPSP synthase family. As to expression, mostly expressed in flower petals, and, to a lower extent, in roots, stems and anthers, but barely in leaves.

Its subcellular location is the plastid. It localises to the chloroplast. The enzyme catalyses 3-phosphoshikimate + phosphoenolpyruvate = 5-O-(1-carboxyvinyl)-3-phosphoshikimate + phosphate. It functions in the pathway metabolic intermediate biosynthesis; chorismate biosynthesis; chorismate from D-erythrose 4-phosphate and phosphoenolpyruvate: step 6/7. With respect to regulation, competitively inhibited by glyphosate. Its function is as follows. Catalyzes the transfer of the enolpyruvyl moiety of phosphoenolpyruvate (PEP) to the 5-hydroxyl of shikimate-3-phosphate (S3P) to produce enolpyruvyl shikimate-3-phosphate and inorganic phosphate. Involved in the accumulation of volatile benzoides in flowers, scent attracting pollinators (e.g. the night-active hawkmoth pollinator Manduca sexta). This Petunia hybrida (Petunia) protein is 3-phosphoshikimate 1-carboxyvinyltransferase, chloroplastic.